We begin with the raw amino-acid sequence, 271 residues long: Hydroxyethylthiazole kinase (271 aa).

Methionine 45 is a binding site for substrate. ATP is bound by residues arginine 121 and threonine 168. Glycine 195 is a binding site for substrate.

It belongs to the Thz kinase family. The cofactor is Mg(2+).

It catalyses the reaction 5-(2-hydroxyethyl)-4-methylthiazole + ATP = 4-methyl-5-(2-phosphooxyethyl)-thiazole + ADP + H(+). It functions in the pathway cofactor biosynthesis; thiamine diphosphate biosynthesis; 4-methyl-5-(2-phosphoethyl)-thiazole from 5-(2-hydroxyethyl)-4-methylthiazole: step 1/1. Catalyzes the phosphorylation of the hydroxyl group of 4-methyl-5-beta-hydroxyethylthiazole (THZ). The protein is Hydroxyethylthiazole kinase of Bacillus pumilus (strain SAFR-032).